Consider the following 127-residue polypeptide: MMRQSVQTVLPESTGNNTLSLRDSVCRDLFQLFSSPHSPLPILLVSGMPEWQGHNQSDKLLQSWYCRQLRSALLFHEPRIAALQVNLKEAYCHELAISLEMMLYHDDEPLTFDLVWQKGSWHRTMPQ.

Belongs to the GpW/Gp25 family. IraD subfamily. As to quaternary structure, interacts with RssB.

It localises to the cytoplasm. Functionally, inhibits RpoS proteolysis by regulating RssB activity, thereby increasing the stability of the sigma stress factor RpoS during oxidative stress. Its effect on RpoS stability is due to its interaction with RssB, which probably blocks the interaction of RssB with RpoS, and the consequent delivery of the RssB-RpoS complex to the ClpXP protein degradation pathway. This Escherichia coli O6:H1 (strain CFT073 / ATCC 700928 / UPEC) protein is Anti-adapter protein IraD.